The following is a 727-amino-acid chain: DNA ligase (727 aa).

NAD(+) is bound by residues 71-75 (DGEFD), 120-121 (SL), and Glu150. Lys152 (N6-AMP-lysine intermediate) is an active-site residue. Residues Arg173, Glu213, Lys329, and Lys353 each coordinate NAD(+). 4 residues coordinate Zn(2+): Cys447, Cys450, Cys466, and Cys472. One can recognise a BRCT domain in the interval 636-725 (SIERHLTGLS…PEAAAEAALP (90 aa)).

The protein belongs to the NAD-dependent DNA ligase family. LigA subfamily. Requires Mg(2+) as cofactor. Mn(2+) serves as cofactor.

It catalyses the reaction NAD(+) + (deoxyribonucleotide)n-3'-hydroxyl + 5'-phospho-(deoxyribonucleotide)m = (deoxyribonucleotide)n+m + AMP + beta-nicotinamide D-nucleotide.. DNA ligase that catalyzes the formation of phosphodiester linkages between 5'-phosphoryl and 3'-hydroxyl groups in double-stranded DNA using NAD as a coenzyme and as the energy source for the reaction. It is essential for DNA replication and repair of damaged DNA. The chain is DNA ligase from Saccharopolyspora erythraea (strain ATCC 11635 / DSM 40517 / JCM 4748 / NBRC 13426 / NCIMB 8594 / NRRL 2338).